Consider the following 511-residue polypeptide: 2-isopropylmalate synthase (511 aa).

Positions 5 to 267 (IQIFDTTLRD…QTQINLEETK (263 aa)) constitute a Pyruvate carboxyltransferase domain. Positions 14, 202, 204, and 238 each coordinate Mn(2+). The segment at 391–511 (KVETLQLQFV…NTKVEEGIHS (121 aa)) is regulatory domain.

The protein belongs to the alpha-IPM synthase/homocitrate synthase family. LeuA type 1 subfamily. As to quaternary structure, homodimer. Mn(2+) is required as a cofactor.

It is found in the cytoplasm. The enzyme catalyses 3-methyl-2-oxobutanoate + acetyl-CoA + H2O = (2S)-2-isopropylmalate + CoA + H(+). It functions in the pathway amino-acid biosynthesis; L-leucine biosynthesis; L-leucine from 3-methyl-2-oxobutanoate: step 1/4. Its function is as follows. Catalyzes the condensation of the acetyl group of acetyl-CoA with 3-methyl-2-oxobutanoate (2-ketoisovalerate) to form 3-carboxy-3-hydroxy-4-methylpentanoate (2-isopropylmalate). The protein is 2-isopropylmalate synthase of Staphylococcus saprophyticus subsp. saprophyticus (strain ATCC 15305 / DSM 20229 / NCIMB 8711 / NCTC 7292 / S-41).